We begin with the raw amino-acid sequence, 239 residues long: UDP-2,3-diacylglucosamine hydrolase (239 aa).

Aspartate 8, histidine 10, aspartate 41, asparagine 78, and histidine 113 together coordinate Mn(2+). 78–79 is a binding site for substrate; sequence NR. Substrate contacts are provided by aspartate 121, serine 159, asparagine 163, lysine 166, and histidine 194. Mn(2+) is bound by residues histidine 194 and histidine 196.

This sequence belongs to the LpxH family. The cofactor is Mn(2+).

Its subcellular location is the cell inner membrane. It catalyses the reaction UDP-2-N,3-O-bis[(3R)-3-hydroxytetradecanoyl]-alpha-D-glucosamine + H2O = 2-N,3-O-bis[(3R)-3-hydroxytetradecanoyl]-alpha-D-glucosaminyl 1-phosphate + UMP + 2 H(+). Its pathway is glycolipid biosynthesis; lipid IV(A) biosynthesis; lipid IV(A) from (3R)-3-hydroxytetradecanoyl-[acyl-carrier-protein] and UDP-N-acetyl-alpha-D-glucosamine: step 4/6. Hydrolyzes the pyrophosphate bond of UDP-2,3-diacylglucosamine to yield 2,3-diacylglucosamine 1-phosphate (lipid X) and UMP by catalyzing the attack of water at the alpha-P atom. Involved in the biosynthesis of lipid A, a phosphorylated glycolipid that anchors the lipopolysaccharide to the outer membrane of the cell. The polypeptide is UDP-2,3-diacylglucosamine hydrolase (Shewanella sp. (strain ANA-3)).